The following is a 245-amino-acid chain: tRNA (guanine-N(1)-)-methyltransferase (245 aa).

Residues glycine 108 and 127 to 132 each bind S-adenosyl-L-methionine; that span reads IGDYVL.

It belongs to the RNA methyltransferase TrmD family. Homodimer.

The protein resides in the cytoplasm. The catalysed reaction is guanosine(37) in tRNA + S-adenosyl-L-methionine = N(1)-methylguanosine(37) in tRNA + S-adenosyl-L-homocysteine + H(+). Functionally, specifically methylates guanosine-37 in various tRNAs. The polypeptide is tRNA (guanine-N(1)-)-methyltransferase (Lactobacillus delbrueckii subsp. bulgaricus (strain ATCC 11842 / DSM 20081 / BCRC 10696 / JCM 1002 / NBRC 13953 / NCIMB 11778 / NCTC 12712 / WDCM 00102 / Lb 14)).